Here is a 190-residue protein sequence, read N- to C-terminus: Protein A52 (190 aa).

It belongs to the orthopoxvirus A52R protein family. As to quaternary structure, interacts with host TRAF6 and IRAK2.

Its function is as follows. Bcl-2-like protein which targets host toll-like receptor signaling complexes to suppress innate immune response. Interacts with host TRAF6 to activate p38 and subsequently induce the expression of several cytokines such as IL-10. Also associates with host IRAK2 to inhibit NF-kappa-B signaling. The polypeptide is Protein A52 (Homo sapiens (Human)).